Here is a 298-residue protein sequence, read N- to C-terminus: tRNA-uridine aminocarboxypropyltransferase 2 (298 aa).

M1 bears the N-acetylmethionine mark. Positions 1 to 10 (MEPQAEERTL) are enriched in basic and acidic residues. The disordered stretch occupies residues 1-55 (MEPQAEERTLGEPAPPPSGALASPTPDEEERTEGGAPPTATPAGASGDSTSADGL). Residues 34 to 45 (GGAPPTATPAGA) show a composition bias toward low complexity. The residue at position 132 (S132) is a Phosphoserine. The short motif at 178–181 (DGTW) is the DXTW element.

Belongs to the TDD superfamily. DTWD2 family.

It is found in the nucleus. The protein localises to the cytoplasm. It catalyses the reaction a uridine in tRNA + S-adenosyl-L-methionine = a 3-[(3S)-3-amino-3-carboxypropyl]uridine in tRNA + S-methyl-5'-thioadenosine + H(+). Its function is as follows. Catalyzes the formation of 3-(3-amino-3-carboxypropyl)uridine (acp3U) at position 20a in the D-loop of several cytoplasmic tRNAs (acp3U(20a)). Also has a weak activity to form acp3U at position 20 in the D-loop of tRNAs (acp3U(20)). Involved in glycoRNA biosynthesis by mediating formation of acp3U, which acts as an attachment site for N-glycans on tRNAs. GlycoRNAs consist of RNAs modified with secretory N-glycans that are presented on the cell surface. The chain is tRNA-uridine aminocarboxypropyltransferase 2 from Mus musculus (Mouse).